A 288-amino-acid polypeptide reads, in one-letter code: MNAQLIDGKAVAARVRAEVKAEVDRLKLEHGLTPGLAVVRVGEDPASKVYVNGKKKAAEEVGFRSWELHPDEGITQAALLEVIHQLNADPAVHGILVQLPLPRHIDPDVIISAVKPEKDVDGFHPLNAGNLLLGRSTTRACTPYGVMRLLEEIGCDPAGKRAVVVGRSNIVGKPMALMLLQKNATVTICHSKSDLRREVEGADILVVAVGAAELVKGAWIKPGAVVIDVGMNRKPDGKLVGDVEFAAAAERASFITPVPGGVGPMTIAMLMRNTLDAAVRYGLVPVVR.

Residues 166 to 168 (GRS) and Ser191 each bind NADP(+).

This sequence belongs to the tetrahydrofolate dehydrogenase/cyclohydrolase family. In terms of assembly, homodimer.

It carries out the reaction (6R)-5,10-methylene-5,6,7,8-tetrahydrofolate + NADP(+) = (6R)-5,10-methenyltetrahydrofolate + NADPH. It catalyses the reaction (6R)-5,10-methenyltetrahydrofolate + H2O = (6R)-10-formyltetrahydrofolate + H(+). Its pathway is one-carbon metabolism; tetrahydrofolate interconversion. Functionally, catalyzes the oxidation of 5,10-methylenetetrahydrofolate to 5,10-methenyltetrahydrofolate and then the hydrolysis of 5,10-methenyltetrahydrofolate to 10-formyltetrahydrofolate. This Myxococcus xanthus (strain DK1622) protein is Bifunctional protein FolD 2.